Reading from the N-terminus, the 404-residue chain is Protein translocase subunit SecD (404 aa).

Transmembrane regions (helical) follow at residues 7–27, 239–259, 262–282, 283–303, 330–350, and 357–377; these read HYIW…FNKV, LIAL…PGIV, IALL…GAAL, TLPG…SNVI, FPAI…LFFL, and GFAV…VFVS.

Belongs to the SecD/SecF family. SecD subfamily. As to quaternary structure, forms a complex with SecF. Part of the essential Sec protein translocation apparatus which comprises SecA, SecYEG and auxiliary proteins SecDF. Other proteins may also be involved.

It localises to the cell inner membrane. In terms of biological role, part of the Sec protein translocase complex. Interacts with the SecYEG preprotein conducting channel. SecDF uses the proton motive force (PMF) to complete protein translocation after the ATP-dependent function of SecA. The polypeptide is Protein translocase subunit SecD (Leptotrichia buccalis (strain ATCC 14201 / DSM 1135 / JCM 12969 / NCTC 10249 / C-1013-b)).